Reading from the N-terminus, the 261-residue chain is Enolase-phosphatase E1 (261 aa).

D16 and E18 together coordinate Mg(2+). Substrate contacts are provided by residues S150 to S151 and K184. D209 lines the Mg(2+) pocket.

The protein belongs to the HAD-like hydrolase superfamily. MasA/MtnC family. Monomer. It depends on Mg(2+) as a cofactor.

The protein resides in the cytoplasm. It is found in the nucleus. It carries out the reaction 5-methylsulfanyl-2,3-dioxopentyl phosphate + H2O = 1,2-dihydroxy-5-(methylsulfanyl)pent-1-en-3-one + phosphate. The protein operates within amino-acid biosynthesis; L-methionine biosynthesis via salvage pathway; L-methionine from S-methyl-5-thio-alpha-D-ribose 1-phosphate: step 3/6. It functions in the pathway amino-acid biosynthesis; L-methionine biosynthesis via salvage pathway; L-methionine from S-methyl-5-thio-alpha-D-ribose 1-phosphate: step 4/6. Its function is as follows. Bifunctional enzyme that catalyzes the enolization of 2,3-diketo-5-methylthiopentyl-1-phosphate (DK-MTP-1-P) into the intermediate 2-hydroxy-3-keto-5-methylthiopentenyl-1-phosphate (HK-MTPenyl-1-P), which is then dephosphorylated to form the acireductone 1,2-dihydroxy-3-keto-5-methylthiopentene (DHK-MTPene). The sequence is that of Enolase-phosphatase E1 (Enoph1) from Rattus norvegicus (Rat).